A 196-amino-acid polypeptide reads, in one-letter code: Neurensin-1 (196 aa).

2 helical membrane-spanning segments follow: residues 67–87 (LISGTVFVILGLTVLAVGFLV) and 121–141 (AVLFCIGGTSMAGCLLMSVFA).

This sequence belongs to the VMP family. Expressed predominantly in brain. Also weakly expressed in lung and spleen. In brain, expressed strongly in nerve fibers of the cerebral cortex, anterior cerebral nuclei, hypothalamus, amygdaloid complex, brain stem of the metaencephalon and medulla oblongata, and moderately expressed in soma of neurons of the dentate gyrus of the hippocampus and Purkinje cells of the cerebellum.

The protein resides in the membrane. It localises to the cell projection. It is found in the neuron projection. In terms of biological role, may play an important role in neural organelle transport, and in transduction of nerve signals or in nerve growth. May play a role in neurite extension. The polypeptide is Neurensin-1 (Mus musculus (Mouse)).